The following is a 440-amino-acid chain: Ribosomal protein uS12 methylthiotransferase RimO (440 aa).

The MTTase N-terminal domain occupies 8–118; sequence PTVGFVSLGC…VMGIVHTHLP (111 aa). Residues C17, C53, C82, C149, C153, and C156 each coordinate [4Fe-4S] cluster. The 238-residue stretch at 135–372 folds into the Radical SAM core domain; it reads LTPDHFAYLK…MQVQEDISAD (238 aa). Residues 375-440 enclose the TRAM domain; the sequence is AAKIDTVIQV…DHHDLYAQVV (66 aa).

This sequence belongs to the methylthiotransferase family. RimO subfamily. It depends on [4Fe-4S] cluster as a cofactor.

The protein resides in the cytoplasm. It carries out the reaction L-aspartate(89)-[ribosomal protein uS12]-hydrogen + (sulfur carrier)-SH + AH2 + 2 S-adenosyl-L-methionine = 3-methylsulfanyl-L-aspartate(89)-[ribosomal protein uS12]-hydrogen + (sulfur carrier)-H + 5'-deoxyadenosine + L-methionine + A + S-adenosyl-L-homocysteine + 2 H(+). Its function is as follows. Catalyzes the methylthiolation of an aspartic acid residue of ribosomal protein uS12. The polypeptide is Ribosomal protein uS12 methylthiotransferase RimO (Dechloromonas aromatica (strain RCB)).